The following is a 202-amino-acid chain: MKRIVILDYGLGNLRSVQKGLEHVGSSPAISGDPEEILAADGLILPGVGAFVDAMKCLDPIKGTIEEYARSGKPMLGICLGQQVLMSSSEEGKLTDGLDLISGKVLRFPKSELKVPHIGWNNIKIKQDHPLFEGIPDNSFVYFVHSFYVDTASENTLASCNYGLDFSASVVNSKGNVMGTQFHPEKSGAIGLKILKNFVDMC.

The region spanning 3-202 is the Glutamine amidotransferase type-1 domain; the sequence is RIVILDYGLG…KILKNFVDMC (200 aa). Catalysis depends on cysteine 79, which acts as the Nucleophile. Catalysis depends on residues histidine 183 and glutamate 185.

As to quaternary structure, heterodimer of HisH and HisF.

It is found in the cytoplasm. The enzyme catalyses 5-[(5-phospho-1-deoxy-D-ribulos-1-ylimino)methylamino]-1-(5-phospho-beta-D-ribosyl)imidazole-4-carboxamide + L-glutamine = D-erythro-1-(imidazol-4-yl)glycerol 3-phosphate + 5-amino-1-(5-phospho-beta-D-ribosyl)imidazole-4-carboxamide + L-glutamate + H(+). It carries out the reaction L-glutamine + H2O = L-glutamate + NH4(+). It participates in amino-acid biosynthesis; L-histidine biosynthesis; L-histidine from 5-phospho-alpha-D-ribose 1-diphosphate: step 5/9. Its function is as follows. IGPS catalyzes the conversion of PRFAR and glutamine to IGP, AICAR and glutamate. The HisH subunit catalyzes the hydrolysis of glutamine to glutamate and ammonia as part of the synthesis of IGP and AICAR. The resulting ammonia molecule is channeled to the active site of HisF. This chain is Imidazole glycerol phosphate synthase subunit HisH, found in Methanosarcina barkeri (strain Fusaro / DSM 804).